A 100-amino-acid chain; its full sequence is Carboxysome shell vertex protein CcmL (100 aa).

The BMV domain occupies 1 to 83 (MQLAKVLGTV…LDAMVVGIID (83 aa)).

It belongs to the CcmL/EutN family. CcmL subfamily. In terms of assembly, homopentamer. Interacts with full-length CcmM.

It is found in the carboxysome. Functionally, probably forms vertices in the carboxysome, a polyhedral inclusion where RuBisCO (ribulose bisphosphate carboxylase, rbcL-rbcS) is sequestered. Has been modeled to induce curvature upon insertion into an otherwise flat hexagonal molecular layer of CcmK subunits. The chain is Carboxysome shell vertex protein CcmL from Synechocystis sp. (strain ATCC 27184 / PCC 6803 / Kazusa).